Here is a 499-residue protein sequence, read N- to C-terminus: MEEFQVYLELARSRQHDFLYPLIFREYIYALAYDHGLNSSILVENLGYDNKSSLLIVKRLITRMYQQNHLIISANDSNKKRFWGYNKNLYSQIISEGFAVSVEIPFSLQLISSLEEAKIIKSYNLRSIHSIFPFFEDKFPYLNYVSDVRIPYPIHLEILVQILRYWVKDASSFHLLRLFIYEYYNWNSLITPKKWISTFSKSNPRFFLFLYNFYVCEYESIFLFLRNKSSYLRLTSSGVFFERIYFYAKIEHLVEVFDKDFPSTLWFFKDPFIHYVRYQGKSILASKNTPFFMNKWKYYLIHLWQCNFYVWSQPGKIHINQLSEHSFYFLGYFSNVRLNPSVVRSQMLENSFIIENVMKKLDTIIPIIPLIRSLAKVKFCNGLGHPISKPVWADSSDFDIIDRFLRICRNLSHYYNGSSKKKSLYRIKYILRLSCIKTLARKHKSTVRVFLKRLGSELLEELFTEEEEILSLIFPRASSTLHRLYRGRIWYLDIFYFHQ.

This sequence belongs to the intron maturase 2 family. MatK subfamily.

It is found in the plastid. The protein resides in the chloroplast. Functionally, usually encoded in the trnK tRNA gene intron. Probably assists in splicing its own and other chloroplast group II introns. This chain is Maturase K, found in Ceratonia siliqua (Carob).